Here is a 628-residue protein sequence, read N- to C-terminus: DNA-directed RNA polymerase subunit gamma (628 aa).

Zn(2+)-binding residues include cysteine 71, cysteine 73, cysteine 86, and cysteine 89. Residues aspartate 467, aspartate 469, and aspartate 471 each contribute to the Mg(2+) site.

It belongs to the RNA polymerase beta' chain family. RpoC1 subfamily. In terms of assembly, in cyanobacteria the RNAP catalytic core is composed of 2 alpha, 1 beta, 1 beta', 1 gamma and 1 omega subunit. When a sigma factor is associated with the core the holoenzyme is formed, which can initiate transcription. The cofactor is Mg(2+). Zn(2+) serves as cofactor.

It catalyses the reaction RNA(n) + a ribonucleoside 5'-triphosphate = RNA(n+1) + diphosphate. Its function is as follows. DNA-dependent RNA polymerase catalyzes the transcription of DNA into RNA using the four ribonucleoside triphosphates as substrates. The sequence is that of DNA-directed RNA polymerase subunit gamma from Crocosphaera subtropica (strain ATCC 51142 / BH68) (Cyanothece sp. (strain ATCC 51142)).